Here is a 78-residue protein sequence, read N- to C-terminus: Large ribosomal subunit protein bL28 (78 aa).

The segment at 1–21 (MSRVCQVTGKRPVSGNNRSHA) is disordered.

The protein belongs to the bacterial ribosomal protein bL28 family.

The chain is Large ribosomal subunit protein bL28 from Serratia proteamaculans (strain 568).